The chain runs to 181 residues: Achaete-scute homolog 3 (181 aa).

Residues 93-106 (AFTRKRNERERQRV) form a basic motif region. One can recognise a bHLH domain in the interval 93–145 (AFTRKRNERERQRVKCVNEGYAQLRHHLPEEYLEKRLSKVETLRAAIKYINYL). The segment at 107 to 145 (KCVNEGYAQLRHHLPEEYLEKRLSKVETLRAAIKYINYL) is helix-loop-helix motif.

In terms of assembly, efficient DNA binding requires dimerization with another bHLH protein. Widely expressed in fetal and adult tissues.

Its subcellular location is the nucleus. Functionally, transcriptional repressor. Inhibits myogenesis. Plays a role in progenitor cells which differentiate into ductal and acinar, but not myoepithelial, cell lineages in the salivary glands. Involved in the functions of the microvillar cells and Bowman's glands and probably, in a non-cell-autonomous manner, in the development or regeneration of a complete olfactory epithelium (OE). The chain is Achaete-scute homolog 3 from Homo sapiens (Human).